Consider the following 491-residue polypeptide: Stromelysin-3 (491 aa).

The first 35 residues, 1 to 35 (MARAACLLRAISRALLLPLPLLLLLLLLLPPQLMA), serve as a signal peptide directing secretion. The propeptide at 36 to 101 (RARPPENHRH…VLNARNRQKR (66 aa)) is activation peptide. A Cysteine switch motif is present at residues 82 to 89 (LRCGVPDP). Residues cysteine 84, histidine 168, and aspartate 170 each coordinate Zn(2+). Positions 175, 176, 178, and 180 each coordinate Ca(2+). 3 residues coordinate Zn(2+): histidine 183, histidine 196, and histidine 218. Glutamate 219 is a catalytic residue. Histidine 222 and histidine 228 together coordinate Zn(2+). A disordered region spans residues 260–279 (YGRPQLTPTSPTPTLSSQAG). Residues 263–277 (PQLTPTSPTPTLSSQ) are compositionally biased toward low complexity. Residues cysteine 297 and cysteine 483 are joined by a disulfide bond. Hemopexin repeat units follow at residues 298-342 (ETSF…WQGL), 343-385 (PSPV…KLGL), 387-435 (GSPV…WRGV), and 436-483 (PSEI…FFDC).

The protein belongs to the peptidase M10A family. Requires Ca(2+) as cofactor. Zn(2+) is required as a cofactor. Post-translationally, the precursor is cleaved by a furin endopeptidase. Highly expressed in ovary and uterus.

Its subcellular location is the secreted. It localises to the extracellular space. The protein localises to the extracellular matrix. In terms of biological role, may play an important role in the progression of epithelial malignancies. This Rattus norvegicus (Rat) protein is Stromelysin-3 (Mmp11).